The primary structure comprises 283 residues: Protein FDD123 (283 aa).

Transmembrane regions (helical) follow at residues 24–44 (WLWA…AWTF), 52–72 (LFHQ…FSMA), 97–117 (YIQW…ATGL), 122–142 (IFTT…AALV), 148–168 (WGYY…LLWH), 185–205 (ILAA…WACA), and 217–237 (MIWY…FFLW).

The protein belongs to the archaeal/bacterial/fungal opsin family.

The protein resides in the membrane. The chain is Protein FDD123 (FDD123) from Trametes versicolor (White-rot fungus).